A 99-amino-acid polypeptide reads, in one-letter code: Meromycolate extension acyl carrier protein (99 aa).

Residues 3–81 (ATQEEIIAGL…DVVAYIQKLE (79 aa)) form the Carrier domain. At Ser41 the chain carries O-(pantetheine 4'-phosphoryl)serine. Residue Lys79 forms an Isoglutamyl lysine isopeptide (Lys-Gln) (interchain with Q-Cter in protein Pup) linkage.

It belongs to the acyl carrier protein (ACP) family. 4'-phosphopantetheine is transferred from CoA to a specific serine of apo-AcpM.

Its subcellular location is the cytoplasm. In terms of biological role, acyl carrier protein involved in meromycolate extension. This Mycolicibacterium smegmatis (strain ATCC 700084 / mc(2)155) (Mycobacterium smegmatis) protein is Meromycolate extension acyl carrier protein (acpM).